Consider the following 278-residue polypeptide: Putative cuticle collagen 91 (278 aa).

2 disordered regions span residues 84 to 109 (LAKN…GVDG) and 140 to 278 (GPAG…SVRQ). The span at 89-98 (PPGPPGPPGA) shows a compositional bias: pro residues. Triple-helical region stretches follow at residues 91–120 (GPPG…DGVA), 137–199 (GEAG…NGQR), and 202–264 (GTPG…PGPD). Low complexity predominate over residues 99-109 (PGAAGEPGVDG). The span at 158–167 (GADGQGGAPG) shows a compositional bias: gly residues. Composition is skewed to low complexity over residues 172-228 (EGPA…AGAP) and 236-245 (APGVDGQPGA).

It belongs to the cuticular collagen family. Collagen polypeptide chains are complexed within the cuticle by disulfide bonds and other types of covalent cross-links.

Functionally, nematode cuticles are composed largely of collagen-like proteins. The cuticle functions both as an exoskeleton and as a barrier to protect the worm from its environment. This chain is Putative cuticle collagen 91 (col-91), found in Caenorhabditis elegans.